The following is a 290-amino-acid chain: Chitinase 10 (290 aa).

The signal sequence occupies residues 1-28 (MAKPTPAPRATPFLLAAVLSIVVVAASG). 2 disulfides stabilise this stretch: C70-C132 and C144-C153. Residue E114 is the Proton donor of the active site. Residues N193 and N234 are each glycosylated (N-linked (GlcNAc...) asparagine). A disulfide bridge connects residues C252 and C284.

It belongs to the glycosyl hydrolase 19 family. Chitinase class I subfamily. In terms of tissue distribution, expressed at low levels in roots, leaves and meristems.

It carries out the reaction Random endo-hydrolysis of N-acetyl-beta-D-glucosaminide (1-&gt;4)-beta-linkages in chitin and chitodextrins.. In Oryza sativa subsp. japonica (Rice), this protein is Chitinase 10 (Cht10).